A 296-amino-acid polypeptide reads, in one-letter code: uncharacterized protein (296 aa).

The chain crosses the membrane as a helical span at residues 7–26 (CFSLVCALGASTYLLWRGWL).

The protein resides in the membrane. This is an uncharacterized protein from Treponema pallidum (strain Nichols).